Reading from the N-terminus, the 484-residue chain is ATP synthase subunit beta (484 aa).

Residue Gly162–Thr169 participates in ATP binding.

This sequence belongs to the ATPase alpha/beta chains family. F-type ATPases have 2 components, CF(1) - the catalytic core - and CF(0) - the membrane proton channel. CF(1) has five subunits: alpha(3), beta(3), gamma(1), delta(1), epsilon(1). CF(0) has three main subunits: a(1), b(2) and c(9-12). The alpha and beta chains form an alternating ring which encloses part of the gamma chain. CF(1) is attached to CF(0) by a central stalk formed by the gamma and epsilon chains, while a peripheral stalk is formed by the delta and b chains.

The protein resides in the cell inner membrane. It catalyses the reaction ATP + H2O + 4 H(+)(in) = ADP + phosphate + 5 H(+)(out). Produces ATP from ADP in the presence of a proton gradient across the membrane. The catalytic sites are hosted primarily by the beta subunits. This chain is ATP synthase subunit beta, found in Agrobacterium fabrum (strain C58 / ATCC 33970) (Agrobacterium tumefaciens (strain C58)).